Here is a 341-residue protein sequence, read N- to C-terminus: Putative amino-acid ABC transporter-binding protein YhdW (341 aa).

A signal peptide spans 1-19; that stretch reads MKKMMIATLAAASVLLAVA.

It belongs to the bacterial solute-binding protein 3 family.

The protein resides in the periplasm. Functionally, probably part of the binding-protein-dependent transport system YdhWXYZ for an amino acid. The chain is Putative amino-acid ABC transporter-binding protein YhdW (yhdW) from Escherichia coli (strain K12).